The chain runs to 464 residues: Aspartyl protease 37 (464 aa).

Positions 1-19 are cleaved as a signal peptide; sequence MNAAVLLLLLALAALPASC. A glycan (N-linked (GlcNAc...) asparagine) is linked at Asn-41. The Peptidase A1 domain maps to 89–456; sequence YLVKLGIGTP…NLRRGRVTFV (368 aa). Residue Asp-107 is part of the active site. Cys-117 and Cys-123 form a disulfide bridge. N-linked (GlcNAc...) asparagine glycosylation is found at Asn-174 and Asn-261. Residues 299–311 show a composition bias toward low complexity; the sequence is TTTTTATATATAP. Positions 299–319 are disordered; the sequence is TTTTTATATATAPAPAPTPSP. Asn-320 carries N-linked (GlcNAc...) asparagine glycosylation. Residue Asp-337 is part of the active site. Residues Cys-376 and Cys-420 are joined by a disulfide bond.

The protein belongs to the peptidase A1 family.

In terms of biological role, anther-specific aspartic protease involved in tapetal programmed cell death (PCD). Directly regulated by the transcription factor EAT1/DTD in anthers during tapetum PCD and degeneration. This is Aspartyl protease 37 from Oryza sativa subsp. japonica (Rice).